A 127-amino-acid chain; its full sequence is Putative lipoprotein LprJ (127 aa).

The N-terminal stretch at 1–34 (MTAHTHDGTRTWRTGRQATTLLALLAGVFGGAAS) is a signal peptide. Residue C35 is the site of N-palmitoyl cysteine attachment. C35 is lipidated: S-diacylglycerol cysteine. Residues 35–99 (CAAPIQADMM…MAEINGMSRD (65 aa)) lie on the Extracellular side of the membrane. The chain crosses the membrane as a helical span at residues 100–120 (MASTFTIVAIGTYCPAVIAPL). Residues 121 to 127 (MPNRLQA) are Cytoplasmic-facing.

May interact with sensor protein KdpD. In terms of processing, modified by Lgt on Cys-35 with an S-linked diacylglycerol, signal peptide is removed by LspA, modified by Lnt with amide-linked fatty acid.

It localises to the cell membrane. Functionally, overexpression induces expression of sensor protein kdpD gene at low K(+) concentrations (0 and 250 uM, tested in M.smegatis). This Mycobacterium tuberculosis (strain ATCC 25618 / H37Rv) protein is Putative lipoprotein LprJ (lprJ).